We begin with the raw amino-acid sequence, 232 residues long: MSILASIQRQVTPIHPEGYPFIGGFAVATLVLSWLWSPLGWLGLMATLWCAYFFRDPARLTPLDESIVISPADGIVSSVGYHMPPPELGLGAEPMQRISVFMSVFDCHVNRAPVTGRVTKIVYRPGLFLNADLDKASMDNERNGLVIENNNGRFGVVQIAGLVARRIVCFAEKGDHLTTGERFGLIRFGSRLDVYMPEGVRPLVGVGAKAVAGETILADRQTDKPRPAFRYG.

The active-site Schiff-base intermediate with substrate; via pyruvic acid is the Ser-190. Position 190 is a pyruvic acid (Ser); by autocatalysis (Ser-190).

Belongs to the phosphatidylserine decarboxylase family. PSD-A subfamily. Heterodimer of a large membrane-associated beta subunit and a small pyruvoyl-containing alpha subunit. Requires pyruvate as cofactor. In terms of processing, is synthesized initially as an inactive proenzyme. Formation of the active enzyme involves a self-maturation process in which the active site pyruvoyl group is generated from an internal serine residue via an autocatalytic post-translational modification. Two non-identical subunits are generated from the proenzyme in this reaction, and the pyruvate is formed at the N-terminus of the alpha chain, which is derived from the carboxyl end of the proenzyme. The post-translation cleavage follows an unusual pathway, termed non-hydrolytic serinolysis, in which the side chain hydroxyl group of the serine supplies its oxygen atom to form the C-terminus of the beta chain, while the remainder of the serine residue undergoes an oxidative deamination to produce ammonia and the pyruvoyl prosthetic group on the alpha chain.

The protein resides in the cell membrane. It catalyses the reaction a 1,2-diacyl-sn-glycero-3-phospho-L-serine + H(+) = a 1,2-diacyl-sn-glycero-3-phosphoethanolamine + CO2. It functions in the pathway phospholipid metabolism; phosphatidylethanolamine biosynthesis; phosphatidylethanolamine from CDP-diacylglycerol: step 2/2. Its function is as follows. Catalyzes the formation of phosphatidylethanolamine (PtdEtn) from phosphatidylserine (PtdSer). This is Phosphatidylserine decarboxylase proenzyme from Beijerinckia indica subsp. indica (strain ATCC 9039 / DSM 1715 / NCIMB 8712).